Reading from the N-terminus, the 258-residue chain is PHD finger protein ALFIN-LIKE 1 (258 aa).

Residues 1–10 show a composition bias toward basic and acidic residues; sequence MDASYRRDGR. 2 disordered regions span residues 1–24 and 150–200; these read MDAS…SAPR and SGSR…DGDH. Gly residues predominate over residues 11-21; that stretch reads GGGGGGGGGGS. Residues 175-187 show a composition bias toward basic and acidic residues; it reads HTSDVARVENNIK. A compositionally biased stretch (acidic residues) spans 188–199; it reads EEDEGYDEDDGD. Residues 202–254 form a PHD-type zinc finger; it reads ETLCGTCGGIYSADEFWIGCDVCERWYHGKCVKITPAKAESIKQYKCPSCSSK.

The protein belongs to the Alfin family. As to quaternary structure, interacts with H3K4me3 and to a lesser extent with H3K4me2.

The protein resides in the nucleus. Functionally, histone-binding component that specifically recognizes H3 tails trimethylated on 'Lys-4' (H3K4me3), which mark transcription start sites of virtually all active genes. This is PHD finger protein ALFIN-LIKE 1 from Oryza sativa subsp. indica (Rice).